A 522-amino-acid chain; its full sequence is Bifunctional purine biosynthesis protein PurH (522 aa).

Residues 1–143 (MIRRALISVS…KNHARVAVVV (143 aa)) form the MGS-like domain.

This sequence belongs to the PurH family.

It catalyses the reaction (6R)-10-formyltetrahydrofolate + 5-amino-1-(5-phospho-beta-D-ribosyl)imidazole-4-carboxamide = 5-formamido-1-(5-phospho-D-ribosyl)imidazole-4-carboxamide + (6S)-5,6,7,8-tetrahydrofolate. The enzyme catalyses IMP + H2O = 5-formamido-1-(5-phospho-D-ribosyl)imidazole-4-carboxamide. Its pathway is purine metabolism; IMP biosynthesis via de novo pathway; 5-formamido-1-(5-phospho-D-ribosyl)imidazole-4-carboxamide from 5-amino-1-(5-phospho-D-ribosyl)imidazole-4-carboxamide (10-formyl THF route): step 1/1. The protein operates within purine metabolism; IMP biosynthesis via de novo pathway; IMP from 5-formamido-1-(5-phospho-D-ribosyl)imidazole-4-carboxamide: step 1/1. This Sorangium cellulosum (strain So ce56) (Polyangium cellulosum (strain So ce56)) protein is Bifunctional purine biosynthesis protein PurH.